A 352-amino-acid chain; its full sequence is Glutamine synthetase cytosolic isozyme (352 aa).

The GS beta-grasp domain maps to 19–98 (FIAEYIWIDA…VMCDTYTPAG (80 aa)). A GS catalytic domain is found at 105–352 (KRCNAAKIFS…TSMIAETTIL (248 aa)).

Belongs to the glutamine synthetase family. Homooctamer.

It is found in the cytoplasm. It catalyses the reaction L-glutamate + NH4(+) + ATP = L-glutamine + ADP + phosphate + H(+). This is Glutamine synthetase cytosolic isozyme (GLN1) from Daucus carota (Wild carrot).